We begin with the raw amino-acid sequence, 217 residues long: tRNA (guanine-N(7)-)-methyltransferase (217 aa).

S-adenosyl-L-methionine contacts are provided by E46, E71, D98, and D120. D120 is a catalytic residue. K124 contacts substrate. The tract at residues 126 to 131 (RHEKRR) is interaction with RNA. Substrate is bound by residues D156 and 196–199 (TEYE).

The protein belongs to the class I-like SAM-binding methyltransferase superfamily. TrmB family.

The enzyme catalyses guanosine(46) in tRNA + S-adenosyl-L-methionine = N(7)-methylguanosine(46) in tRNA + S-adenosyl-L-homocysteine. It participates in tRNA modification; N(7)-methylguanine-tRNA biosynthesis. Its function is as follows. Catalyzes the formation of N(7)-methylguanine at position 46 (m7G46) in tRNA. The sequence is that of tRNA (guanine-N(7)-)-methyltransferase from Lactobacillus gasseri (strain ATCC 33323 / DSM 20243 / BCRC 14619 / CIP 102991 / JCM 1131 / KCTC 3163 / NCIMB 11718 / NCTC 13722 / AM63).